A 240-amino-acid polypeptide reads, in one-letter code: Putative tyrosine phosphatase 067L (240 aa).

In terms of domain architecture, Tyrosine-protein phosphatase spans 3–151 (QASFFVADKA…EREWPLNPTQ (149 aa)). Cysteine 96 acts as the Phosphocysteine intermediate in catalysis.

This sequence belongs to the protein-tyrosine phosphatase family.

It catalyses the reaction O-phospho-L-tyrosyl-[protein] + H2O = L-tyrosyl-[protein] + phosphate. The polypeptide is Putative tyrosine phosphatase 067L (Aedes vexans (Inland floodwater mosquito)).